The primary structure comprises 287 residues: Bifunctional protein FolD (287 aa).

Residues 160–162, serine 189, and isoleucine 230 each bind NADP(+); that span reads GRS.

It belongs to the tetrahydrofolate dehydrogenase/cyclohydrolase family. As to quaternary structure, homodimer.

The enzyme catalyses (6R)-5,10-methylene-5,6,7,8-tetrahydrofolate + NADP(+) = (6R)-5,10-methenyltetrahydrofolate + NADPH. It catalyses the reaction (6R)-5,10-methenyltetrahydrofolate + H2O = (6R)-10-formyltetrahydrofolate + H(+). It functions in the pathway one-carbon metabolism; tetrahydrofolate interconversion. Functionally, catalyzes the oxidation of 5,10-methylenetetrahydrofolate to 5,10-methenyltetrahydrofolate and then the hydrolysis of 5,10-methenyltetrahydrofolate to 10-formyltetrahydrofolate. This chain is Bifunctional protein FolD, found in Chlamydia felis (strain Fe/C-56) (Chlamydophila felis).